A 180-amino-acid polypeptide reads, in one-letter code: Adenine phosphoribosyltransferase (180 aa).

The protein belongs to the purine/pyrimidine phosphoribosyltransferase family. Homodimer.

The protein localises to the cytoplasm. It catalyses the reaction AMP + diphosphate = 5-phospho-alpha-D-ribose 1-diphosphate + adenine. It functions in the pathway purine metabolism; AMP biosynthesis via salvage pathway; AMP from adenine: step 1/1. Catalyzes a salvage reaction resulting in the formation of AMP, that is energically less costly than de novo synthesis. This Mycolicibacterium paratuberculosis (strain ATCC BAA-968 / K-10) (Mycobacterium paratuberculosis) protein is Adenine phosphoribosyltransferase.